The following is a 515-amino-acid chain: 2,3-bisphosphoglycerate-independent phosphoglycerate mutase 1 (515 aa).

Residues D14 and S64 each coordinate Mn(2+). Catalysis depends on S64, which acts as the Phosphoserine intermediate. Residues H125, 155-156 (RD), R187, R193, 264-267 (RADR), and K337 each bind substrate. Positions 404, 408, 445, 446, and 464 each coordinate Mn(2+).

The protein belongs to the BPG-independent phosphoglycerate mutase family. It depends on Mn(2+) as a cofactor.

The catalysed reaction is (2R)-2-phosphoglycerate = (2R)-3-phosphoglycerate. Its pathway is carbohydrate degradation; glycolysis; pyruvate from D-glyceraldehyde 3-phosphate: step 3/5. Catalyzes the interconversion of 2-phosphoglycerate and 3-phosphoglycerate. This chain is 2,3-bisphosphoglycerate-independent phosphoglycerate mutase 1, found in Methanosarcina acetivorans (strain ATCC 35395 / DSM 2834 / JCM 12185 / C2A).